A 211-amino-acid polypeptide reads, in one-letter code: Ion-translocating oxidoreductase complex subunit G (211 aa).

A helical transmembrane segment spans residues 9–29 (GLTLAIFACATTGLVALTQYL). FMN phosphoryl threonine is present on Thr-175.

Belongs to the RnfG family. In terms of assembly, the complex is composed of six subunits: RnfA, RnfB, RnfC, RnfD, RnfE and RnfG. It depends on FMN as a cofactor.

The protein resides in the cell inner membrane. In terms of biological role, part of a membrane-bound complex that couples electron transfer with translocation of ions across the membrane. The chain is Ion-translocating oxidoreductase complex subunit G from Vibrio parahaemolyticus serotype O3:K6 (strain RIMD 2210633).